Consider the following 234-residue polypeptide: Cyclin-J18 (234 aa).

The protein belongs to the cyclin family.

The chain is Cyclin-J18 (CYCJ18) from Arabidopsis thaliana (Mouse-ear cress).